The sequence spans 144 residues: Large ribosomal subunit protein uL13 (144 aa).

This sequence belongs to the universal ribosomal protein uL13 family. As to quaternary structure, part of the 50S ribosomal subunit.

This protein is one of the early assembly proteins of the 50S ribosomal subunit, although it is not seen to bind rRNA by itself. It is important during the early stages of 50S assembly. This Nitrosomonas europaea (strain ATCC 19718 / CIP 103999 / KCTC 2705 / NBRC 14298) protein is Large ribosomal subunit protein uL13.